A 97-amino-acid chain; its full sequence is Large ribosomal subunit protein bL28 (97 aa).

This sequence belongs to the bacterial ribosomal protein bL28 family.

The polypeptide is Large ribosomal subunit protein bL28 (Bartonella quintana (strain Toulouse) (Rochalimaea quintana)).